A 256-amino-acid chain; its full sequence is Type III pantothenate kinase (256 aa).

6–13 is a binding site for ATP; it reads DVGNSNIV. Substrate contacts are provided by residues Y100 and 107–110; that span reads GADR. Catalysis depends on D109, which acts as the Proton acceptor. Residue D129 coordinates K(+). T132 is an ATP binding site. Position 184 (T184) interacts with substrate.

Belongs to the type III pantothenate kinase family. Homodimer. It depends on NH4(+) as a cofactor. K(+) is required as a cofactor.

Its subcellular location is the cytoplasm. The enzyme catalyses (R)-pantothenate + ATP = (R)-4'-phosphopantothenate + ADP + H(+). The protein operates within cofactor biosynthesis; coenzyme A biosynthesis; CoA from (R)-pantothenate: step 1/5. In terms of biological role, catalyzes the phosphorylation of pantothenate (Pan), the first step in CoA biosynthesis. The sequence is that of Type III pantothenate kinase from Geotalea daltonii (strain DSM 22248 / JCM 15807 / FRC-32) (Geobacter daltonii).